A 433-amino-acid chain; its full sequence is Homogentisate 1,2-dioxygenase (433 aa).

Histidine 288 (proton acceptor) is an active-site residue. Fe cation-binding residues include histidine 331 and glutamate 337. Residues tyrosine 346 and histidine 367 each contribute to the homogentisate site. Position 367 (histidine 367) interacts with Fe cation.

The protein belongs to the homogentisate dioxygenase family. In terms of assembly, hexamer; dimer of trimers. The cofactor is Fe cation.

The enzyme catalyses homogentisate + O2 = 4-maleylacetoacetate + H(+). It participates in amino-acid degradation; L-phenylalanine degradation; acetoacetate and fumarate from L-phenylalanine: step 4/6. In terms of biological role, involved in the catabolism of homogentisate (2,5-dihydroxyphenylacetate or 2,5-OH-PhAc), a central intermediate in the degradation of phenylalanine and tyrosine. Catalyzes the oxidative ring cleavage of the aromatic ring of homogentisate to yield maleylacetoacetate. In Pseudomonas entomophila (strain L48), this protein is Homogentisate 1,2-dioxygenase.